We begin with the raw amino-acid sequence, 83 residues long: Small ribosomal subunit protein uS17 (83 aa).

It belongs to the universal ribosomal protein uS17 family. In terms of assembly, part of the 30S ribosomal subunit.

Functionally, one of the primary rRNA binding proteins, it binds specifically to the 5'-end of 16S ribosomal RNA. The chain is Small ribosomal subunit protein uS17 from Chlamydia trachomatis serovar L2 (strain ATCC VR-902B / DSM 19102 / 434/Bu).